A 257-amino-acid chain; its full sequence is Ribonuclease HII (257 aa).

The RNase H type-2 domain occupies 72–257; sequence TYIAGIDEVG…FAPIKDMIQK (186 aa). Residues aspartate 78, glutamate 79, and aspartate 170 each coordinate a divalent metal cation.

Belongs to the RNase HII family. Mn(2+) is required as a cofactor. Mg(2+) serves as cofactor.

The protein resides in the cytoplasm. The enzyme catalyses Endonucleolytic cleavage to 5'-phosphomonoester.. Endonuclease that specifically degrades the RNA of RNA-DNA hybrids. The polypeptide is Ribonuclease HII (Bacillus thuringiensis (strain Al Hakam)).